We begin with the raw amino-acid sequence, 302 residues long: Glycine--tRNA ligase alpha subunit (302 aa).

It belongs to the class-II aminoacyl-tRNA synthetase family. Tetramer of two alpha and two beta subunits.

Its subcellular location is the cytoplasm. It catalyses the reaction tRNA(Gly) + glycine + ATP = glycyl-tRNA(Gly) + AMP + diphosphate. The sequence is that of Glycine--tRNA ligase alpha subunit from Xanthomonas axonopodis pv. citri (strain 306).